Consider the following 452-residue polypeptide: MDGTIKEALSVVSDDQSLFDSAYGAAAHLPKADMTASGSPDYGQPHKINPLPPQQEWMNQPVRVNVKREYDHMNGSRESPVDCSVSKCGKLVGGGESNTMSYTSYVDEKNGPPPPNMTTNERRVIVPADPTLWTQEHVRQWLEWAIKEYGLMEIDTSFFQNMDGKELCKLNKEDFLRATSLYNTEVLLSHLTYLRESSLLPYNTTSHTDPSSRLNVKEDPSYDSVRRGGWGSNMNSGLNKSPPLAGAQTMSKNTEQRPQPDPYQILGPTSSRLANPGSGQIQLWQFLLELLSDSANASCITWEGTNGEFKMTDPDEVARRWGERKSKPNMNYDKLSRALRYYYDKNIMTKVHGKRYAYKFDFHGIAQALQPHPTESSMYKYPSDISYVPSYHTHQQKVNFVPPHPSSMPVTSSSFFGAASQYWTSPTGGIYPNPNVPRHPNTHVPSHLGSYY.

Residue Ser39 is modified to Phosphoserine. Residues 112–198 (PPPPNMTTNE…SHLTYLRESS (87 aa)) enclose the PNT domain. Polar residues predominate over residues 202-214 (YNTTSHTDPSSRL). The interval 202–272 (YNTTSHTDPS…YQILGPTSSR (71 aa)) is disordered. Basic and acidic residues predominate over residues 215–226 (NVKEDPSYDSVR). A compositionally biased stretch (polar residues) spans 248–257 (QTMSKNTEQR). The ETS DNA-binding region spans 281-361 (IQLWQFLLEL…HGKRYAYKFD (81 aa)).

Belongs to the ETS family. As to quaternary structure, can form homodimers or heterodimers with ETV6/TEL1.

It localises to the nucleus. Sequence-specific transcriptional activator. Recognizes the DNA sequence 5'-C[CA]GGAAGT-3'. The sequence is that of Friend leukemia integration 1 transcription factor (FLI1) from Bos taurus (Bovine).